Here is a 338-residue protein sequence, read N- to C-terminus: Ketol-acid reductoisomerase (NADP(+)) (338 aa).

The region spanning 1–181 (MKVYYDKDAD…GGTKGGVIET (181 aa)) is the KARI N-terminal Rossmann domain. NADP(+) is bound by residues 24–27 (YGSQ), Arg47, and Ser52. Residue His107 is part of the active site. Gly133 provides a ligand contact to NADP(+). A KARI C-terminal knotted domain is found at 182 to 327 (NFREETETDL…GQLRDMMPWI (146 aa)). Mg(2+) contacts are provided by Asp190, Glu194, Glu226, and Glu230. Ser251 lines the substrate pocket.

The protein belongs to the ketol-acid reductoisomerase family. It depends on Mg(2+) as a cofactor.

It catalyses the reaction (2R)-2,3-dihydroxy-3-methylbutanoate + NADP(+) = (2S)-2-acetolactate + NADPH + H(+). It carries out the reaction (2R,3R)-2,3-dihydroxy-3-methylpentanoate + NADP(+) = (S)-2-ethyl-2-hydroxy-3-oxobutanoate + NADPH + H(+). Its pathway is amino-acid biosynthesis; L-isoleucine biosynthesis; L-isoleucine from 2-oxobutanoate: step 2/4. It functions in the pathway amino-acid biosynthesis; L-valine biosynthesis; L-valine from pyruvate: step 2/4. Functionally, involved in the biosynthesis of branched-chain amino acids (BCAA). Catalyzes an alkyl-migration followed by a ketol-acid reduction of (S)-2-acetolactate (S2AL) to yield (R)-2,3-dihydroxy-isovalerate. In the isomerase reaction, S2AL is rearranged via a Mg-dependent methyl migration to produce 3-hydroxy-3-methyl-2-ketobutyrate (HMKB). In the reductase reaction, this 2-ketoacid undergoes a metal-dependent reduction by NADPH to yield (R)-2,3-dihydroxy-isovalerate. This is Ketol-acid reductoisomerase (NADP(+)) from Aromatoleum aromaticum (strain DSM 19018 / LMG 30748 / EbN1) (Azoarcus sp. (strain EbN1)).